The chain runs to 362 residues: Carbamoyl phosphate synthase small chain (362 aa).

A CPSase region spans residues 1–169 (MGKRLLILED…TKTAYPAPGV (169 aa)). L-glutamine-binding residues include Ser46, Gly220, and Gly222. Residues 172-358 (NIVLVDFGLK…LELIDAFQLE (187 aa)) enclose the Glutamine amidotransferase type-1 domain. The Nucleophile role is filled by Cys247. Positions 248, 251, 289, 291, and 292 each coordinate L-glutamine. Active-site residues include His331 and Asp333.

Belongs to the CarA family. As to quaternary structure, composed of two chains; the small (or glutamine) chain promotes the hydrolysis of glutamine to ammonia, which is used by the large (or ammonia) chain to synthesize carbamoyl phosphate. Tetramer of heterodimers (alpha,beta)4.

It catalyses the reaction hydrogencarbonate + L-glutamine + 2 ATP + H2O = carbamoyl phosphate + L-glutamate + 2 ADP + phosphate + 2 H(+). The enzyme catalyses L-glutamine + H2O = L-glutamate + NH4(+). The protein operates within amino-acid biosynthesis; L-arginine biosynthesis; carbamoyl phosphate from bicarbonate: step 1/1. It participates in pyrimidine metabolism; UMP biosynthesis via de novo pathway; (S)-dihydroorotate from bicarbonate: step 1/3. Small subunit of the glutamine-dependent carbamoyl phosphate synthetase (CPSase). CPSase catalyzes the formation of carbamoyl phosphate from the ammonia moiety of glutamine, carbonate, and phosphate donated by ATP, constituting the first step of 2 biosynthetic pathways, one leading to arginine and/or urea and the other to pyrimidine nucleotides. The small subunit (glutamine amidotransferase) binds and cleaves glutamine to supply the large subunit with the substrate ammonia. This Streptococcus mutans serotype c (strain ATCC 700610 / UA159) protein is Carbamoyl phosphate synthase small chain.